The primary structure comprises 534 residues: CTP synthase (534 aa).

Residues 1-267 (MTKYIFVTGG…DQIVCDHLKL (267 aa)) form an amidoligase domain region. Ser-13 provides a ligand contact to CTP. Ser-13 serves as a coordination point for UTP. 14 to 19 (SIGKGI) contacts ATP. Position 54 (Tyr-54) interacts with L-glutamine. Asp-71 serves as a coordination point for ATP. Mg(2+)-binding residues include Asp-71 and Glu-141. Residues 148–150 (DIE), 188–193 (KTKPTQ), and Lys-224 each bind CTP. UTP-binding positions include 188-193 (KTKPTQ) and Lys-224. One can recognise a Glutamine amidotransferase type-1 domain in the interval 292–534 (KIALVGKYVE…FVTAAVENAK (243 aa)). Gly-354 is an L-glutamine binding site. Cys-381 serves as the catalytic Nucleophile; for glutamine hydrolysis. L-glutamine contacts are provided by residues 382–385 (LGMQ), Glu-405, and Arg-463. Residues His-508 and Glu-510 contribute to the active site.

Belongs to the CTP synthase family. In terms of assembly, homotetramer.

It carries out the reaction UTP + L-glutamine + ATP + H2O = CTP + L-glutamate + ADP + phosphate + 2 H(+). It catalyses the reaction L-glutamine + H2O = L-glutamate + NH4(+). The enzyme catalyses UTP + NH4(+) + ATP = CTP + ADP + phosphate + 2 H(+). It functions in the pathway pyrimidine metabolism; CTP biosynthesis via de novo pathway; CTP from UDP: step 2/2. Allosterically activated by GTP, when glutamine is the substrate; GTP has no effect on the reaction when ammonia is the substrate. The allosteric effector GTP functions by stabilizing the protein conformation that binds the tetrahedral intermediate(s) formed during glutamine hydrolysis. Inhibited by the product CTP, via allosteric rather than competitive inhibition. In terms of biological role, catalyzes the ATP-dependent amination of UTP to CTP with either L-glutamine or ammonia as the source of nitrogen. Regulates intracellular CTP levels through interactions with the four ribonucleotide triphosphates. The sequence is that of CTP synthase from Streptococcus thermophilus (strain ATCC BAA-250 / LMG 18311).